The following is a 647-amino-acid chain: Meiotically up-regulated protein C8C9.04 (647 aa).

Disordered stretches follow at residues 1–241 (MTTN…ELKP) and 387–647 (RAQQ…KLFH). The segment covering 29–46 (KSTNAVEQNNNSSQASVT) has biased composition (polar residues). Basic residues predominate over residues 49–67 (NKKKAAKRAKKKAAKKKKQ). The segment covering 92–103 (TILQEPGFTQTI) has biased composition (polar residues). Positions 134–145 (PSASTSTAVPTT) are enriched in low complexity. Positions 146–155 (EARNTSITEP) are enriched in polar residues. Residues 156 to 177 (ANSPSSSSSSASTKSTATTQSA) are compositionally biased toward low complexity. A phosphoserine mark is found at Ser-162 and Ser-165. Thr-168 carries the post-translational modification Phosphothreonine. Residues 193–215 (QLGNSPASITSKPATTSAAQPSS) show a composition bias toward polar residues. A phosphoserine mark is found at Ser-197 and Ser-200. A compositionally biased stretch (basic and acidic residues) spans 232–241 (AEKEIPELKP). Polar residues-rich tracts occupy residues 390-406 (QPEQYESSVVQEATETV), 413-432 (VSSTVKNEVNVPSTIPTESE), and 488-508 (PSSTGQEPTTPSTPAKSAQSS). Position 396 is a phosphoserine (Ser-396). 2 positions are modified to phosphoserine: Ser-489 and Ser-490. Thr-491 is subject to Phosphothreonine. Ser-515, Ser-519, and Ser-523 each carry phosphoserine. A compositionally biased stretch (low complexity) spans 518 to 530 (ASAPSSPGTTSAA). Residues 561-589 (GSATTIPSPGSATTKPTPGSATTKPTPVS) show a composition bias toward polar residues. The segment covering 596-613 (AGTTKPAPAAGATATAEN) has biased composition (low complexity). A compositionally biased stretch (basic residues) spans 633–647 (SWFKRMKKSFGKLFH).

In terms of biological role, has a role in meiosis and sporulation. The chain is Meiotically up-regulated protein C8C9.04 from Schizosaccharomyces pombe (strain 972 / ATCC 24843) (Fission yeast).